Here is a 241-residue protein sequence, read N- to C-terminus: tRNA (guanine-N(1)-)-methyltransferase (241 aa).

S-adenosyl-L-methionine is bound by residues Gly-123 and 143–148 (IGDYVL).

The protein belongs to the RNA methyltransferase TrmD family. In terms of assembly, homodimer.

The protein localises to the cytoplasm. The enzyme catalyses guanosine(37) in tRNA + S-adenosyl-L-methionine = N(1)-methylguanosine(37) in tRNA + S-adenosyl-L-homocysteine + H(+). Specifically methylates guanosine-37 in various tRNAs. This Roseobacter denitrificans (strain ATCC 33942 / OCh 114) (Erythrobacter sp. (strain OCh 114)) protein is tRNA (guanine-N(1)-)-methyltransferase.